Consider the following 476-residue polypeptide: Aspartyl/glutamyl-tRNA(Asn/Gln) amidotransferase subunit B (476 aa).

This sequence belongs to the GatB/GatE family. GatB subfamily. Heterotrimer of A, B and C subunits.

It carries out the reaction L-glutamyl-tRNA(Gln) + L-glutamine + ATP + H2O = L-glutaminyl-tRNA(Gln) + L-glutamate + ADP + phosphate + H(+). The enzyme catalyses L-aspartyl-tRNA(Asn) + L-glutamine + ATP + H2O = L-asparaginyl-tRNA(Asn) + L-glutamate + ADP + phosphate + 2 H(+). Allows the formation of correctly charged Asn-tRNA(Asn) or Gln-tRNA(Gln) through the transamidation of misacylated Asp-tRNA(Asn) or Glu-tRNA(Gln) in organisms which lack either or both of asparaginyl-tRNA or glutaminyl-tRNA synthetases. The reaction takes place in the presence of glutamine and ATP through an activated phospho-Asp-tRNA(Asn) or phospho-Glu-tRNA(Gln). In Vesicomyosocius okutanii subsp. Calyptogena okutanii (strain HA), this protein is Aspartyl/glutamyl-tRNA(Asn/Gln) amidotransferase subunit B.